Here is a 135-residue protein sequence, read N- to C-terminus: Succinate dehydrogenase assembly factor 2, mitochondrial (135 aa).

The protein belongs to the SDHAF2 family. In terms of assembly, interacts with the flavoprotein subunit within the SDH catalytic dimer.

The protein localises to the mitochondrion matrix. Functionally, plays an essential role in the assembly of succinate dehydrogenase (SDH), an enzyme complex (also referred to as respiratory complex II) that is a component of both the tricarboxylic acid (TCA) cycle and the mitochondrial electron transport chain, and which couples the oxidation of succinate to fumarate with the reduction of ubiquinone (coenzyme Q) to ubiquinol. Required for flavinylation (covalent attachment of FAD) of the flavoprotein subunit of the SDH catalytic dimer. The sequence is that of Succinate dehydrogenase assembly factor 2, mitochondrial from Meyerozyma guilliermondii (strain ATCC 6260 / CBS 566 / DSM 6381 / JCM 1539 / NBRC 10279 / NRRL Y-324) (Yeast).